The primary structure comprises 502 residues: Lysine--tRNA ligase (502 aa).

The interval 1–22 is disordered; that stretch reads MSDHEQAQAQSQDENQIMAERR. Residues Glu413 and Glu420 each coordinate Mg(2+).

The protein belongs to the class-II aminoacyl-tRNA synthetase family. As to quaternary structure, homodimer. Mg(2+) serves as cofactor.

The protein resides in the cytoplasm. The enzyme catalyses tRNA(Lys) + L-lysine + ATP = L-lysyl-tRNA(Lys) + AMP + diphosphate. The protein is Lysine--tRNA ligase of Chromobacterium violaceum (strain ATCC 12472 / DSM 30191 / JCM 1249 / CCUG 213 / NBRC 12614 / NCIMB 9131 / NCTC 9757 / MK).